Consider the following 482-residue polypeptide: tRNA sulfurtransferase (482 aa).

One can recognise a THUMP domain in the interval 61–165 (LAIRDALTRI…DDRLLLIKGR (105 aa)). Residues 183–184 (LI), Lys265, Gly287, and Gln296 each bind ATP. Cys344 and Cys456 are oxidised to a cystine. The 79-residue stretch at 404–482 (FGPNDVILDI…GFANVKVYRP (79 aa)) folds into the Rhodanese domain. Cys456 (cysteine persulfide intermediate) is an active-site residue.

It belongs to the ThiI family.

The protein localises to the cytoplasm. The catalysed reaction is [ThiI sulfur-carrier protein]-S-sulfanyl-L-cysteine + a uridine in tRNA + 2 reduced [2Fe-2S]-[ferredoxin] + ATP + H(+) = [ThiI sulfur-carrier protein]-L-cysteine + a 4-thiouridine in tRNA + 2 oxidized [2Fe-2S]-[ferredoxin] + AMP + diphosphate. It catalyses the reaction [ThiS sulfur-carrier protein]-C-terminal Gly-Gly-AMP + S-sulfanyl-L-cysteinyl-[cysteine desulfurase] + AH2 = [ThiS sulfur-carrier protein]-C-terminal-Gly-aminoethanethioate + L-cysteinyl-[cysteine desulfurase] + A + AMP + 2 H(+). Its pathway is cofactor biosynthesis; thiamine diphosphate biosynthesis. Catalyzes the ATP-dependent transfer of a sulfur to tRNA to produce 4-thiouridine in position 8 of tRNAs, which functions as a near-UV photosensor. Also catalyzes the transfer of sulfur to the sulfur carrier protein ThiS, forming ThiS-thiocarboxylate. This is a step in the synthesis of thiazole, in the thiamine biosynthesis pathway. The sulfur is donated as persulfide by IscS. This chain is tRNA sulfurtransferase, found in Salmonella choleraesuis (strain SC-B67).